A 297-amino-acid polypeptide reads, in one-letter code: MTRPIVSSRPLKALYDIPAPAKLNLFLHITGRRPDGYHLLQSVFMLIDWCDTLHFELRTDGQISRTDLNSPAQNNFEALPAEDLAVRAARALQAASGTPLGVHISLEKNIPSQAGMGGGSSDAASCLLALQRLWGVRLPSQDLRAIALSLGADVPFFLSGSHAWVEGIGEQITPITLPAARFVVLKPAAGVSTPDIFNAPDLKRDTKTATMLGFAAYADGPVFGFGHNDLQPVAQKLCPQISQSLDWLESQQLQGRMTGSGSAVFAQIFDDADLAAAPGNWIIRKCKNLQTHPLACW.

Lysine 22 is a catalytic residue. An ATP-binding site is contributed by 111–121 (PSQAGMGGGSS). Aspartate 153 is a catalytic residue.

This sequence belongs to the GHMP kinase family. IspE subfamily.

It catalyses the reaction 4-CDP-2-C-methyl-D-erythritol + ATP = 4-CDP-2-C-methyl-D-erythritol 2-phosphate + ADP + H(+). It participates in isoprenoid biosynthesis; isopentenyl diphosphate biosynthesis via DXP pathway; isopentenyl diphosphate from 1-deoxy-D-xylulose 5-phosphate: step 3/6. In terms of biological role, catalyzes the phosphorylation of the position 2 hydroxy group of 4-diphosphocytidyl-2C-methyl-D-erythritol. This is 4-diphosphocytidyl-2-C-methyl-D-erythritol kinase from Polaromonas naphthalenivorans (strain CJ2).